The following is a 492-amino-acid chain: MESRTTGPLTTETYDGPTVAFMILGAALVFFMVPGLGFLYSGLARRKSALALIWVVLMATLVGILQWYFWGYSLAFSKSAPNNKFIGNLDSFGFRNVYGKKFDEDAYPELAYATFQMMFSCVNLSIIAGATAERGRLLPHMVFLFILATIGYCPVTYWIWSPGGWAYQWGVLDWAGGGNIEILSAVSGFVYSWFLGKRNEKLLINFRPHNVSLVTLGTSILWFGWLLFNSASSLSPNLRSVYAFMNTCLSAITGGMTWCLLDYRSEKKWSTVGLCSGIISGLVAATPSSGCITLYGSLIQGIVAGVVCNFATKLKYYAKVDDAMDILAEHGVAGVIGLIFNALFGADWVIGMDGTTEHEGGWVTHNYKQMYKQIAYIAASIGYTAAVTAIICFVLGYIPGMRLRISEEAEEAGMDEDQIGEFAYDYVEVRRDYYLWGVDEDSQRSDVNHRVNNAHLAAERSSSGTNSSSDGNGEMIQSEKILPIHQEDPANR.

At 1–18 (MESRTTGPLTTETYDGPT) the chain is on the extracellular side. The helical transmembrane segment at 19-39 (VAFMILGAALVFFMVPGLGFL) threads the bilayer. Topologically, residues 40–49 (YSGLARRKSA) are cytoplasmic. Residues 50–70 (LALIWVVLMATLVGILQWYFW) form a helical membrane-spanning segment. Topologically, residues 71–109 (GYSLAFSKSAPNNKFIGNLDSFGFRNVYGKKFDEDAYPE) are extracellular. A helical transmembrane segment spans residues 110–130 (LAYATFQMMFSCVNLSIIAGA). The Cytoplasmic portion of the chain corresponds to 131–140 (TAERGRLLPH). The helical transmembrane segment at 141 to 161 (MVFLFILATIGYCPVTYWIWS) threads the bilayer. At 162–174 (PGGWAYQWGVLDW) the chain is on the extracellular side. A helical transmembrane segment spans residues 175-195 (AGGGNIEILSAVSGFVYSWFL). The Cytoplasmic portion of the chain corresponds to 196–210 (GKRNEKLLINFRPHN). A helical transmembrane segment spans residues 211 to 231 (VSLVTLGTSILWFGWLLFNSA). Topologically, residues 232–240 (SSLSPNLRS) are extracellular. The chain crosses the membrane as a helical span at residues 241 to 261 (VYAFMNTCLSAITGGMTWCLL). Residues 262-268 (DYRSEKK) are Cytoplasmic-facing. A helical membrane pass occupies residues 269–289 (WSTVGLCSGIISGLVAATPSS). Residue glycine 290 is a topological domain, extracellular. A helical membrane pass occupies residues 291 to 311 (CITLYGSLIQGIVAGVVCNFA). At 312–331 (TKLKYYAKVDDAMDILAEHG) the chain is on the cytoplasmic side. Residues 332–352 (VAGVIGLIFNALFGADWVIGM) form a helical membrane-spanning segment. Over 353 to 373 (DGTTEHEGGWVTHNYKQMYKQ) the chain is Extracellular. A helical transmembrane segment spans residues 374-394 (IAYIAASIGYTAAVTAIICFV). Over 395 to 492 (LGYIPGMRLR…PIHQEDPANR (98 aa)) the chain is Cytoplasmic. Phosphoserine is present on residues serine 442 and serine 445. Residues 455 to 492 (HLAAERSSSGTNSSSDGNGEMIQSEKILPIHQEDPANR) form a disordered region. Residues 461–473 (SSSGTNSSSDGNG) are compositionally biased toward low complexity.

Belongs to the ammonia transporter channel (TC 1.A.11.2) family.

It localises to the membrane. Functionally, transporter for ammonium (both charged and uncharged NH3 and NH4) to use as a nitrogen source. Can also transport methylamine. The affinity of MEP1 is about twenty times lower than that of MEP2. MEP3 has the lowest affinity. The chain is Ammonium transporter MEP1 (MEP1) from Saccharomyces cerevisiae (strain ATCC 204508 / S288c) (Baker's yeast).